A 299-amino-acid polypeptide reads, in one-letter code: Bifunctional protein FolD 2 (299 aa).

Residues 168–170 (GRS), Ser193, and Ile234 contribute to the NADP(+) site.

This sequence belongs to the tetrahydrofolate dehydrogenase/cyclohydrolase family. Homodimer.

It catalyses the reaction (6R)-5,10-methylene-5,6,7,8-tetrahydrofolate + NADP(+) = (6R)-5,10-methenyltetrahydrofolate + NADPH. It carries out the reaction (6R)-5,10-methenyltetrahydrofolate + H2O = (6R)-10-formyltetrahydrofolate + H(+). It functions in the pathway one-carbon metabolism; tetrahydrofolate interconversion. Its function is as follows. Catalyzes the oxidation of 5,10-methylenetetrahydrofolate to 5,10-methenyltetrahydrofolate and then the hydrolysis of 5,10-methenyltetrahydrofolate to 10-formyltetrahydrofolate. In Rhizobium etli (strain ATCC 51251 / DSM 11541 / JCM 21823 / NBRC 15573 / CFN 42), this protein is Bifunctional protein FolD 2.